The primary structure comprises 65 residues: Large ribosomal subunit protein bL35 (65 aa).

This sequence belongs to the bacterial ribosomal protein bL35 family.

The sequence is that of Large ribosomal subunit protein bL35 from Wolbachia sp. subsp. Brugia malayi (strain TRS).